The primary structure comprises 165 residues: Lymphocyte antigen 6K (165 aa).

Residues 1-17 form the signal peptide; it reads MALLALLLVVALPRVWT. A glycan (N-linked (GlcNAc...) asparagine) is linked at Asn20. Residues 47–141 enclose the UPAR/Ly6 domain; that stretch reads ERENTFECQN…VFKEYAGSMG (95 aa). A lipid anchor (GPI-anchor amidated glycine) is attached at Gly138. A propeptide spans 139–165 (removed in mature form); that stretch reads SMGESCGGLWLAILLLLASIAAGLSLS.

In terms of assembly, interacts with TEX101. As to expression, specifically expressed in testis (at protein level).

It is found in the secreted. Its subcellular location is the cytoplasm. The protein localises to the cell membrane. The protein resides in the cytoplasmic vesicle. It localises to the secretory vesicle. It is found in the acrosome. Its subcellular location is the membrane raft. In terms of biological role, required for sperm migration into the oviduct and male fertility by controlling binding of sperm to zona pellucida. May play a role in cell growth. The protein is Lymphocyte antigen 6K of Homo sapiens (Human).